The chain runs to 494 residues: 3-octaprenyl-4-hydroxybenzoate carboxy-lyase (494 aa).

Asn-172 contacts Mn(2+). Prenylated FMN contacts are provided by residues 175–177, 189–191, and 194–195; these read IYR, RWL, and RG. Glu-238 is a Mn(2+) binding site. Asp-287 (proton donor) is an active-site residue.

The protein belongs to the UbiD family. Homohexamer. Prenylated FMN is required as a cofactor. Requires Mn(2+) as cofactor.

It is found in the cell membrane. It carries out the reaction a 4-hydroxy-3-(all-trans-polyprenyl)benzoate + H(+) = a 2-(all-trans-polyprenyl)phenol + CO2. It participates in cofactor biosynthesis; ubiquinone biosynthesis. Catalyzes the decarboxylation of 3-octaprenyl-4-hydroxy benzoate to 2-octaprenylphenol, an intermediate step in ubiquinone biosynthesis. The chain is 3-octaprenyl-4-hydroxybenzoate carboxy-lyase from Escherichia coli O9:H4 (strain HS).